The primary structure comprises 432 residues: Leucine-rich repeat-containing protein ODA7 (432 aa).

LRR repeat units lie at residues 47-68, 69-90, 91-112, 113-134, and 138-159; these read NLKA…PPLA, DLKC…EAVP, GLDT…ACCP, ALRT…AHLA, and ALQT…DILK. An LRRCT domain is found at 173–211; that stretch reads PVVSNIKNYRKVLVTSIPSLTYLDDRPVFDNERKIAQAW. A coiled-coil region spans residues 212-243; sequence LEGGLEGERAMRNQLKEEEEERSRKNHEFMMQ. 2 disordered regions span residues 297-332 and 368-432; these read RPGE…AAAE and EELD…NDLD. 2 stretches are compositionally biased toward low complexity: residues 323–332 and 407–425; these read GAWGSGAAAE and VAAA…ISAA.

It belongs to the DNAAF1 family. In terms of assembly, interacts with both outer row and I1 inner row dyneins.

It is found in the cytoplasm. Its subcellular location is the cytoskeleton. The protein localises to the cilium axoneme. Functionally, cilium-specific protein required for cilia structures. Axonemal dynein-associated protein that participates in a structural link between inner and outer row dyneins. The chain is Leucine-rich repeat-containing protein ODA7 (ODA7) from Chlamydomonas reinhardtii (Chlamydomonas smithii).